A 914-amino-acid chain; its full sequence is Valine--tRNA ligase (914 aa).

Positions 47 to 57 match the 'HIGH' region motif; that stretch reads PYPTGELHMGH. The short motif at 552-556 is the 'KMSKS' region element; the sequence is KMSKS. ATP is bound at residue Lys555.

The protein belongs to the class-I aminoacyl-tRNA synthetase family. ValS type 2 subfamily.

It localises to the cytoplasm. It catalyses the reaction tRNA(Val) + L-valine + ATP = L-valyl-tRNA(Val) + AMP + diphosphate. In terms of biological role, catalyzes the attachment of valine to tRNA(Val). As ValRS can inadvertently accommodate and process structurally similar amino acids such as threonine, to avoid such errors, it has a 'posttransfer' editing activity that hydrolyzes mischarged Thr-tRNA(Val) in a tRNA-dependent manner. The sequence is that of Valine--tRNA ligase from Methanopyrus kandleri (strain AV19 / DSM 6324 / JCM 9639 / NBRC 100938).